Here is a 254-residue protein sequence, read N- to C-terminus: MIGSVRVLVLLLAFIVTASAIGYSGGGYQPHSCDGDWPEKFPEAPKGFQFRCKCPCKCPPKSPTTTSISTSTVSTTPERLTKPYEETDTPIPTHSSPSTSTSTSTSTSTSTSTSRSTSTVTPTTRSSTTTTATSTPTSSSKATTTSAQITQPEIPQAAPGTVLKGEEFPVKQDGLGDGGVVHGPGTTFWIRSPTPPNIPLLVGGQSRLATVRPDSPYASDAALNPLNGGAGDMEFGIKNVGTPKTPRAVINPDA.

The segment at 60–161 (PKSPTTTSIS…PEIPQAAPGT (102 aa)) is disordered. Low complexity-rich tracts occupy residues 63–77 (PTTT…STTP) and 89–146 (TPIP…TTTS).

This is an uncharacterized protein from Caenorhabditis elegans.